The sequence spans 404 residues: 5-aminolevulinate synthase (404 aa).

Positions 21 and 136 each coordinate substrate. Residues S188, H216, and T244 each contribute to the pyridoxal 5'-phosphate site. K247 is an active-site residue. Position 247 is an N6-(pyridoxal phosphate)lysine (K247). Pyridoxal 5'-phosphate-binding residues include T276 and T277. T362 lines the substrate pocket.

Belongs to the class-II pyridoxal-phosphate-dependent aminotransferase family. As to quaternary structure, homodimer. Pyridoxal 5'-phosphate is required as a cofactor.

It carries out the reaction succinyl-CoA + glycine + H(+) = 5-aminolevulinate + CO2 + CoA. It functions in the pathway porphyrin-containing compound metabolism; protoporphyrin-IX biosynthesis; 5-aminolevulinate from glycine: step 1/1. The protein is 5-aminolevulinate synthase (hemA) of Rhizobium meliloti (strain 1021) (Ensifer meliloti).